Reading from the N-terminus, the 154-residue chain is Crossover junction endodeoxyribonuclease RuvC (154 aa).

Residues Asp7, Glu67, and Asp139 contribute to the active site. Residues Asp7, Glu67, and Asp139 each contribute to the Mg(2+) site.

It belongs to the RuvC family. Homodimer which binds Holliday junction (HJ) DNA. The HJ becomes 2-fold symmetrical on binding to RuvC with unstacked arms; it has a different conformation from HJ DNA in complex with RuvA. In the full resolvosome a probable DNA-RuvA(4)-RuvB(12)-RuvC(2) complex forms which resolves the HJ. Mg(2+) is required as a cofactor.

It is found in the cytoplasm. The catalysed reaction is Endonucleolytic cleavage at a junction such as a reciprocal single-stranded crossover between two homologous DNA duplexes (Holliday junction).. Its function is as follows. The RuvA-RuvB-RuvC complex processes Holliday junction (HJ) DNA during genetic recombination and DNA repair. Endonuclease that resolves HJ intermediates. Cleaves cruciform DNA by making single-stranded nicks across the HJ at symmetrical positions within the homologous arms, yielding a 5'-phosphate and a 3'-hydroxyl group; requires a central core of homology in the junction. The consensus cleavage sequence is 5'-(A/T)TT(C/G)-3'. Cleavage occurs on the 3'-side of the TT dinucleotide at the point of strand exchange. HJ branch migration catalyzed by RuvA-RuvB allows RuvC to scan DNA until it finds its consensus sequence, where it cleaves and resolves the cruciform DNA. The polypeptide is Crossover junction endodeoxyribonuclease RuvC (Parasynechococcus marenigrum (strain WH8102)).